Here is a 325-residue protein sequence, read N- to C-terminus: SPbeta prophage-derived uncharacterized protein YopR (325 aa).

In Bacillus subtilis (strain 168), this protein is SPbeta prophage-derived uncharacterized protein YopR (yopR).